The chain runs to 262 residues: Putative carbamate hydrolase RutD (262 aa).

Belongs to the AB hydrolase superfamily. Hydrolase RutD family.

It carries out the reaction carbamate + 2 H(+) = NH4(+) + CO2. Involved in pyrimidine catabolism. May facilitate the hydrolysis of carbamate, a reaction that can also occur spontaneously. The chain is Putative carbamate hydrolase RutD from Rhizobium rhizogenes (strain K84 / ATCC BAA-868) (Agrobacterium radiobacter).